We begin with the raw amino-acid sequence, 230 residues long: Osmotin-like protein PR-5x (230 aa).

The signal sequence occupies residues 1 to 25 (MYTNMGYLTSSFIFFFLALVTYTYA). 8 disulfides stabilise this stretch: Cys-34-Cys-229, Cys-76-Cys-86, Cys-91-Cys-97, Cys-145-Cys-217, Cys-150-Cys-200, Cys-158-Cys-168, Cys-172-Cys-181, and Cys-182-Cys-187.

This sequence belongs to the thaumatin family.

Its subcellular location is the secreted. It localises to the vacuole. The catalysed reaction is Endohydrolysis of (1-&gt;3)- or (1-&gt;4)-linkages in beta-D-glucans when the glucose residue whose reducing group is involved in the linkage to be hydrolyzed is itself substituted at C-3.. Its function is as follows. Antifungal protein. May bind to beta-glucans and have beta-1,3-D-glucanase activity. The polypeptide is Osmotin-like protein PR-5x (Solanum lycopersicum (Tomato)).